A 431-amino-acid chain; its full sequence is SH2 domain-containing protein 4B (431 aa).

A disordered region spans residues glutamine 201–tyrosine 235. A compositionally biased stretch (basic and acidic residues) spans glutamate 211–tyrosine 235. The 93-residue stretch at tryptophan 325–cysteine 417 folds into the SH2 domain.

In Mus musculus (Mouse), this protein is SH2 domain-containing protein 4B (Sh2d4b).